Reading from the N-terminus, the 230-residue chain is D-glycero-alpha-D-manno-heptose 1-phosphate guanylyltransferase (230 aa).

The protein belongs to the D-alpha-D-heptose-1-P guanylyltransferase family.

The catalysed reaction is D-glycero-alpha-D-manno-heptose 1-phosphate + GTP + H(+) = GDP-D-glycero-alpha-D-manno-heptose + diphosphate. It participates in nucleotide-sugar biosynthesis; GDP-D-glycero-alpha-D-manno-heptose biosynthesis; GDP-D-glycero-alpha-D-manno-heptose from D-glycero-alpha-D-manno-heptose 7-phosphate: step 3/3. The protein operates within cell surface structure biogenesis; S-layer biogenesis. Its function is as follows. Catalyzes the GDP transfer from GTP to D-glycero-alpha-D-manno-heptose 1-phosphate, yielding GDP-D-alpha-D-heptose. Cannot use ATP, CTP, dTTP or UTP as substrate. The protein is D-glycero-alpha-D-manno-heptose 1-phosphate guanylyltransferase (hddC) of Aneurinibacillus thermoaerophilus.